The sequence spans 175 residues: uncharacterized protein (175 aa).

Positions 1–173 (MYKNIIKLIS…VYKEKYKKLL (173 aa)) constitute a Macro domain.

This sequence belongs to the MacroD-type family.

This is an uncharacterized protein from Fusobacterium nucleatum subsp. nucleatum (strain ATCC 25586 / DSM 15643 / BCRC 10681 / CIP 101130 / JCM 8532 / KCTC 2640 / LMG 13131 / VPI 4355).